The sequence spans 271 residues: uncharacterized protein (271 aa).

One can recognise an AB hydrolase-1 domain in the interval 24-124; that stretch reads PIILLVHGGG…QVHVMIPHEP (101 aa).

Belongs to the AB hydrolase superfamily.

This is an uncharacterized protein from Bacillus subtilis (strain 168).